Consider the following 138-residue polypeptide: Putative nickel-responsive regulator (138 aa).

Histidine 78, histidine 89, histidine 91, and cysteine 97 together coordinate Ni(2+).

Belongs to the transcriptional regulatory CopG/NikR family. Ni(2+) is required as a cofactor.

Functionally, transcriptional regulator. The chain is Putative nickel-responsive regulator from Pyrococcus abyssi (strain GE5 / Orsay).